The following is a 240-amino-acid chain: Pyridoxine 5'-phosphate synthase (240 aa).

Asparagine 6 contributes to the 3-amino-2-oxopropyl phosphate binding site. 8 to 9 (DH) contributes to the 1-deoxy-D-xylulose 5-phosphate binding site. A 3-amino-2-oxopropyl phosphate-binding site is contributed by arginine 17. The active-site Proton acceptor is histidine 42. 2 residues coordinate 1-deoxy-D-xylulose 5-phosphate: arginine 44 and histidine 49. The Proton acceptor role is filled by glutamate 69. 1-deoxy-D-xylulose 5-phosphate is bound at residue threonine 99. Histidine 190 functions as the Proton donor in the catalytic mechanism. Residues glycine 191 and 212–213 (GH) each bind 3-amino-2-oxopropyl phosphate.

Belongs to the PNP synthase family. As to quaternary structure, homooctamer; tetramer of dimers.

The protein localises to the cytoplasm. It catalyses the reaction 3-amino-2-oxopropyl phosphate + 1-deoxy-D-xylulose 5-phosphate = pyridoxine 5'-phosphate + phosphate + 2 H2O + H(+). The protein operates within cofactor biosynthesis; pyridoxine 5'-phosphate biosynthesis; pyridoxine 5'-phosphate from D-erythrose 4-phosphate: step 5/5. Functionally, catalyzes the complicated ring closure reaction between the two acyclic compounds 1-deoxy-D-xylulose-5-phosphate (DXP) and 3-amino-2-oxopropyl phosphate (1-amino-acetone-3-phosphate or AAP) to form pyridoxine 5'-phosphate (PNP) and inorganic phosphate. The polypeptide is Pyridoxine 5'-phosphate synthase (Pseudomonas putida (strain ATCC 700007 / DSM 6899 / JCM 31910 / BCRC 17059 / LMG 24140 / F1)).